We begin with the raw amino-acid sequence, 74 residues long: uncharacterized protein (74 aa).

Residues 20–40 form a helical membrane-spanning segment; sequence IYSYTLLTLLVITLICYLIHI.

Belongs to the asfivirus KP93L family.

Its subcellular location is the host membrane. This is an uncharacterized protein from African swine fever virus (isolate Tick/South Africa/Pretoriuskop Pr4/1996) (ASFV).